A 492-amino-acid chain; its full sequence is Phytoene desaturase (lycopene-forming) (492 aa).

5 to 38 (VVIGAGFGGLALAIRLQAAGIPTVLLEQRDKPGG) provides a ligand contact to FAD.

It belongs to the carotenoid/retinoid oxidoreductase family. FAD serves as cofactor.

The enzyme catalyses 15-cis-phytoene + 4 A = all-trans-lycopene + 4 AH2. Its pathway is carotenoid biosynthesis; lycopene biosynthesis. Functionally, this enzyme converts phytoene into lycopene via the intermediaries of phytofluene, zeta-carotene and neurosporene by the introduction of four double bonds. The sequence is that of Phytoene desaturase (lycopene-forming) (crtI) from Pseudescherichia vulneris (Escherichia vulneris).